We begin with the raw amino-acid sequence, 192 residues long: uncharacterized protein (192 aa).

This is an uncharacterized protein from Sinorhizobium fredii (strain NBRC 101917 / NGR234).